We begin with the raw amino-acid sequence, 156 residues long: ATP synthase subunit b (156 aa).

The chain crosses the membrane as a helical span at residues 7-27 (IFFQMLVFFVLGWFTMKFVWP).

It belongs to the ATPase B chain family. As to quaternary structure, F-type ATPases have 2 components, F(1) - the catalytic core - and F(0) - the membrane proton channel. F(1) has five subunits: alpha(3), beta(3), gamma(1), delta(1), epsilon(1). F(0) has three main subunits: a(1), b(2) and c(10-14). The alpha and beta chains form an alternating ring which encloses part of the gamma chain. F(1) is attached to F(0) by a central stalk formed by the gamma and epsilon chains, while a peripheral stalk is formed by the delta and b chains.

The protein resides in the cell inner membrane. Functionally, f(1)F(0) ATP synthase produces ATP from ADP in the presence of a proton or sodium gradient. F-type ATPases consist of two structural domains, F(1) containing the extramembraneous catalytic core and F(0) containing the membrane proton channel, linked together by a central stalk and a peripheral stalk. During catalysis, ATP synthesis in the catalytic domain of F(1) is coupled via a rotary mechanism of the central stalk subunits to proton translocation. Component of the F(0) channel, it forms part of the peripheral stalk, linking F(1) to F(0). In Bordetella petrii (strain ATCC BAA-461 / DSM 12804 / CCUG 43448), this protein is ATP synthase subunit b.